We begin with the raw amino-acid sequence, 107 residues long: Parvalbumin beta 2 (107 aa).

Residue S1 is modified to N-acetylserine. EF-hand domains are found at residues 37–72 (XSPD…FSAS) and 89–107 (DADG…LVKQ). Ca(2+) contacts are provided by D50, D52, S54, F56, E58, E61, D89, D91, D93, M95, and E100.

This sequence belongs to the parvalbumin family.

In terms of biological role, in muscle, parvalbumin is thought to be involved in relaxation after contraction. It binds two calcium ions. The chain is Parvalbumin beta 2 from Oncorhynchus mykiss (Rainbow trout).